Here is a 63-residue protein sequence, read N- to C-terminus: MPYSPSLILMGHTHTDATVYTTLKLPYSHTPIHGPFSLNQYQMHPHHYARHLPQRSIPCAIYP.

This is an uncharacterized protein from Saccharomyces cerevisiae (strain ATCC 204508 / S288c) (Baker's yeast).